A 199-amino-acid polypeptide reads, in one-letter code: TATA-box-binding protein (199 aa).

2 tandem repeats follow at residues 10–86 (IENI…VKLL) and 101–177 (IQNI…YNQL).

It belongs to the TBP family.

Functionally, general factor that plays a role in the activation of archaeal genes transcribed by RNA polymerase. Binds specifically to the TATA box promoter element which lies close to the position of transcription initiation. This chain is TATA-box-binding protein, found in Pyrobaculum calidifontis (strain DSM 21063 / JCM 11548 / VA1).